Consider the following 343-residue polypeptide: Ferrochelatase (343 aa).

Fe cation is bound by residues H211 and E292.

This sequence belongs to the ferrochelatase family.

It localises to the cytoplasm. It carries out the reaction heme b + 2 H(+) = protoporphyrin IX + Fe(2+). The protein operates within porphyrin-containing compound metabolism; protoheme biosynthesis; protoheme from protoporphyrin-IX: step 1/1. Catalyzes the ferrous insertion into protoporphyrin IX. This chain is Ferrochelatase, found in Gluconobacter oxydans (strain 621H) (Gluconobacter suboxydans).